The following is a 279-amino-acid chain: Dehydrogenase/reductase SDR family member 4 (279 aa).

Position 37-61 (37-61) interacts with NADP(+); that stretch reads LVTASTDGIGFAIARRLAQDGAHVV. N6-acetyllysine; alternate is present on K93. K93 carries the N6-succinyllysine; alternate modification. Position 106 is an N6-acetyllysine (K106). Residue S170 coordinates substrate. The Proton acceptor role is filled by Y183. NADP(+) is bound at residue K187. The residue at position 221 (S221) is a Phosphoserine. Residue K235 is modified to N6-succinyllysine. Positions 277–279 match the Peroxisomal targeting signal motif; that stretch reads SHL.

The protein belongs to the short-chain dehydrogenases/reductases (SDR) family. In terms of assembly, homotetramer.

It localises to the peroxisome. It catalyses the reaction a secondary alcohol + NADP(+) = a ketone + NADPH + H(+). The enzyme catalyses 3alpha-hydroxy-5beta-pregnan-20-one + NADP(+) = 5beta-pregnan-3,20-dione + NADPH + H(+). The catalysed reaction is 5beta-dihydrotestosterone + NADPH + H(+) = 5beta-androstane-3alpha,17beta-diol + NADP(+). It carries out the reaction all-trans-retinol + NADP(+) = all-trans-retinal + NADPH + H(+). It catalyses the reaction isatin + NADPH + H(+) = 3-hydroxyindolin-2-one + NADP(+). In terms of biological role, NADPH-dependent oxidoreductase which catalyzes the reduction of a variety of compounds bearing carbonyl groups including ketosteroids, alpha-dicarbonyl compounds, aldehydes, aromatic ketones and quinones. Reduces all-trans-retinal and 9-cis retinal. Reduces 3-ketosteroids and benzil into 3alpha-hydroxysteroids and S-benzoin, respectively, in contrast to the stereoselectivity of primates DHRS4s which produce 3beta-hydroxysteroids and R-benzoin. In the reverse reaction, catalyzes the NADP-dependent oxidation of 3alpha-hydroxysteroids and alcohol, but with much lower efficiency. Involved in the metabolism of 3alpha-hydroxysteroids, retinoid, isatin and xenobiotic carbonyl compounds. This Bos taurus (Bovine) protein is Dehydrogenase/reductase SDR family member 4 (DHRS4).